Consider the following 652-residue polypeptide: Potassium voltage-gated channel subfamily KQT member 1 (652 aa).

The Cytoplasmic portion of the chain corresponds to 1–110; that stretch reads MSSEQPAWTF…YNFLERPTGW (110 aa). A helical membrane pass occupies residues 111–132; sequence KCFVYHFTVFLIVLICLIFSVL. Over 133-143 the chain is Extracellular; that stretch reads STIQQYNNLAT. The chain crosses the membrane as a helical span at residues 144-166; sequence ETLFWMEIVLVVFFGAEYVVRLW. Over 167–182 the chain is Cytoplasmic; sequence SAGCRSKYVGVWGRLR. The helical transmembrane segment at 183–208 threads the bilayer; it reads FARKPISVIDLIVVVASVIVLCVGSN. Topologically, residues 209-216 are extracellular; that stretch reads GQVFATSA. Residues 217 to 232 traverse the membrane as a helical; Voltage-sensor segment; it reads IRGIRFLQILRMLHVD. Positions 228–236 are interaction with KCNE3; sequence MLHVDRQGG. The Cytoplasmic portion of the chain corresponds to 233–250; it reads RQGGTWRLLGSVVFIHRQ. Residue Q234 participates in a 1,2-diacyl-sn-glycero-3-phospho-(1D-myo-inositol-4,5-bisphosphate) binding. The chain crosses the membrane as a helical span at residues 251–273; that stretch reads ELITTLYIGFLGLIFSSYFVYLA. Topologically, residues 274–289 are extracellular; sequence EKDAIDSSGEYQFGSY. Residues 290–310 constitute an intramembrane region (pore-forming); that stretch reads ADALWWGVVTVTTIGYGDKVP. Residues 311-312 lie on the Extracellular side of the membrane; sequence QT. Residues 313 to 338 traverse the membrane as a helical segment; it reads WIGKTIASCFSVFAISFFALPAGILG. At 339 to 652 the chain is on the cytoplasmic side; it reads SGFALKVQQK…VPRMTQDNIS (314 aa). Positions 360 to 372 are interaction with CALM; that stretch reads AAASLIQTAWRCY. The interval 393-419 is disordered; sequence HHLMSPSPKPKKSAMVKKKKIRTERDE. The span at 401 to 414 shows a compositional bias: basic residues; it reads KPKKSAMVKKKKIR. The interaction with CALM; calcium-dependent stretch occupies residues 504-518; the sequence is KVIRRMQYFVAKKKF. The interval 524–561 is interaction with KCNE1 C-terminus; sequence PYDVRDVIEQYSQGHLNLMVRIKELQRRLDQSLGKPSL. Positions 577-605 are interaction with AKAP9; the sequence is IGSRLNRVEDKVTQMDHKLNLITDMLHHL. The C-terminal assembly domain (tetramerization) stretch occupies residues 578–609; it reads GSRLNRVEDKVTQMDHKLNLITDMLHHLLTNQ. The interval 609 to 652 is disordered; it reads QQGSQSIRTPHRSNSLNSENHPSRNTLPTYEQLNVPRMTQDNIS.

This sequence belongs to the potassium channel family. KQT (TC 1.A.1.15) subfamily. Kv7.1/KCNQ1 sub-subfamily. Tetramer. Heterotetramer with KCNE1; targets to the membrane raft. Interacts (via C-terminus) with CALM; forms a heterotetramer in a calcium-independent manner. Interacts with KCNE2; form a heterooligomer complex that targets to the membrane raft and leading to currents with an apparently instantaneous activation, a rapid deactivation process and a linear current-voltage relationship and decreases the amplitude of the outward current. Interacts with KCNE3; four KCNE3 molecules are bound to one KCNQ1 tetramer (4:4 KCNQ1:KCNE3 stoichiometry); alters membrane raft localization; affects KCNQ1 structure and gating properties. Interacts with KCNE4; impairs KCNQ1 localization in lipid rafts and inhibits voltage-gated potassium channel activity. Interacts with KCNE5; impairs KCNQ1 localization in lipid rafts and only conducts current upon strong and continued depolarization.

It localises to the cell membrane. Its subcellular location is the cytoplasmic vesicle membrane. The protein resides in the membrane raft. It is found in the endoplasmic reticulum. The protein localises to the basolateral cell membrane. It catalyses the reaction K(+)(in) = K(+)(out). PIP2 molecule is essential to activate KCNQ channels by inducing the coupling of the voltage-sensing domain (VSD) and the pore-forming domain (PD). Upon channel activation, PIP2 disrupts the VSD-calmodulin/CALM interactions, causing the release of CALM from the VSD which triggers the opening of the gate. Calcium potentiates KCNQ1 channel current through calcium-bound CALM. Calcium-bound CALM competes with PIP2 to stabilize the channel open state. Pore-forming subunit of the voltage-gated potassium (Kv) channel involved in the regulation of cardiomyocyte excitability and important in normal development and functions of myocardium, inner ear, stomach and colon. Associates with KCNE beta subunits that modulates current kinetics. Induces a voltage-dependent by rapidly activating and slowly deactivating potassium-selective outward current. Also promotes a delayed voltage activated potassium current showing outward rectification characteristic. During beta-adrenergic receptor stimulation participates in cardiac repolarization by associating with KCNE1 to form the I(Ks) cardiac potassium current that increases the amplitude and slows down the activation kinetics of outward potassium current I(Ks). When associated with KCNE3, forms the potassium channel that is important for cyclic AMP-stimulated intestinal secretion of chloride ions. When associated with KCNE2, forms a heterooligomer complex leading to currents with an apparently instantaneous activation, a rapid deactivation process and a linear current-voltage relationship and decreases the amplitude of the outward current. When associated with KCNE4, inhibits voltage-gated potassium channel activity. When associated with KCNE5, this complex only conducts current upon strong and continued depolarization. The chain is Potassium voltage-gated channel subfamily KQT member 1 from Xenopus laevis (African clawed frog).